We begin with the raw amino-acid sequence, 356 residues long: 3-dehydroquinate synthase (356 aa).

NAD(+)-binding positions include 71-76, 105-109, 129-130, K142, and K151; these read EGEASK, GVTGD, and TS. Zn(2+) contacts are provided by E184, H247, and H264.

It belongs to the sugar phosphate cyclases superfamily. Dehydroquinate synthase family. The cofactor is Co(2+). Zn(2+) serves as cofactor. NAD(+) is required as a cofactor.

It is found in the cytoplasm. It carries out the reaction 7-phospho-2-dehydro-3-deoxy-D-arabino-heptonate = 3-dehydroquinate + phosphate. Its pathway is metabolic intermediate biosynthesis; chorismate biosynthesis; chorismate from D-erythrose 4-phosphate and phosphoenolpyruvate: step 2/7. Functionally, catalyzes the conversion of 3-deoxy-D-arabino-heptulosonate 7-phosphate (DAHP) to dehydroquinate (DHQ). The protein is 3-dehydroquinate synthase of Lactococcus lactis subsp. cremoris (strain SK11).